We begin with the raw amino-acid sequence, 767 residues long: MSNSAQSRRIRVTIVAADGLYKRDVFRFPDPFAVLTVDGEQTHTTTAIKKTLNPYWNETFEVNVTDNSTIAIQVFDQKKFKKKGQGFLGVINLRVGDVLDLAIGGDEMLTRDLKKSNENTVVHGKIIINLSTTAQSTLQVPSSAASGARTQRTSITNDPQSSQSSSVSRNPASSRAGSPTRDNAPAASPASSEPRTFSSFEDQYGRLPPGWERRTDNLGRTYYVDHNTRSTTWIRPNLSSVAGAAAAELHSSASSANVTEGVQPSSSNAARRTEASVLTSNATTAGSGELPPGWEQRYTPEGRPYFVDHNTRTTTWVDPRRQQYIRSYGGPNNATIQQQPVSQLGPLPSGWEMRLTNTARVYFVDHNTKTTTWDDPRLPSSLDQNVPQYKRDFRRKLIYFLSQPALHPLPGQCHIKVRRNHIFEDSYAEIMRQSATDLKKRLMIKFDGEDGLDYGGLSREYFFLLSHEMFNPFYCLFEYSSVDNYTLQINPHSGINPEHLNYFKFIGRVIGLAIFHRRFVDAFFVVSFYKMILQKKVTLQDMESMDAEYYRSLVWILDNDITGVLDLTFSVEDNCFGEVVTIDLKPNGRNIEVTEENKREYVDLVTVWRIQKRIEEQFNAFHEGFSELIPQELINVFDERELELLIGGISEIDMEDWKKHTDYRSYSENDQIIKWFWELMDEWSNEKKSRLLQFTTGTSRIPVNGFKDLQGSDGPRKFTIEKAGEPNKLPKAHTCFNRLDLPPYTSKKDLDHKLSIAVEETIGFGQE.

In terms of domain architecture, C2 spans 1–111 (MSNSAQSRRI…AIGGDEMLTR (111 aa)). Polar residues predominate over residues 138-158 (LQVPSSAASGARTQRTSITND). Disordered stretches follow at residues 138–216 (LQVP…RRTD) and 252–306 (SASS…RPYF). Thr156 is subject to Phosphothreonine. Positions 159 to 176 (PQSSQSSSVSRNPASSRA) are enriched in low complexity. Ser178 is modified (phosphoserine). The residue at position 180 (Thr180) is a Phosphothreonine. The segment covering 184–194 (APAASPASSEP) has biased composition (low complexity). Residues 211–236 (WERRTDNLGRTYYVDHNTRSTTWIRP) enclose the WW 1 domain. Positions 257 to 286 (NVTEGVQPSSSNAARRTEASVLTSNATTAG) are enriched in polar residues. 2 WW domains span residues 294 to 319 (WEQR…WVDP) and 351 to 376 (WEMR…WDDP). The HECT domain maps to 463–767 (FLLSHEMFNP…VEETIGFGQE (305 aa)). The Glycyl thioester intermediate role is filled by Cys735.

It is found in the membrane. Its subcellular location is the cytoplasm. It catalyses the reaction S-ubiquitinyl-[E2 ubiquitin-conjugating enzyme]-L-cysteine + [acceptor protein]-L-lysine = [E2 ubiquitin-conjugating enzyme]-L-cysteine + N(6)-ubiquitinyl-[acceptor protein]-L-lysine.. It participates in protein modification; protein ubiquitination. Functionally, E3 ubiquitin-protein ligase which accepts ubiquitin from an E2 ubiquitin-conjugating enzyme in the form of a thioester and then directly transfers the ubiquitin to targeted substrates. Regulates ubiquitination of cdc25. The chain is E3 ubiquitin-protein ligase pub1 (pub1) from Schizosaccharomyces pombe (strain 972 / ATCC 24843) (Fission yeast).